Here is a 461-residue protein sequence, read N- to C-terminus: MSPLQWLTISFALIIFHSLTVSSSVLSHSDRVTRLPGQPRVGFQQYSGYVTVDDKKQRALFYYFAEAETNPSSKPLVLWLNGGPGCSSLGVGAFSENGPFRPKGPILVKNQHSWNQEANMLYLETPVGVGFSYSTQSSHYEGVNDKITARDNLVFLQRWFLKFPHYLNRSLFITGESYAGHYVPQLAELMIQYNKKHHLFNLRGIAIGNPVLEFATDFNSRAEYFWSHGLISDSTYKMFTSYCNYSRYVSEYYRGSMSSMCSKVMSQVSTETSRFVDKYDVTLDVCIPSVLSQSKVVSPNQVGESVDVCVEDETVNYLNRRDVQEALHARLIGVREWTVCSNVLDYQLLDVEIPTINIVGSLVKAGVPVLVYSGDQDSVIPLTGSRTLVSRLAKQLGLRTSVPYRVWFAGQQVGGWTQVYGNVLSFATVRGASHEVPFSQPERSLVLFKAFLDGHPLPEEF.

The signal sequence occupies residues 1 to 24; it reads MSPLQWLTISFALIIFHSLTVSSS. 3 disulfides stabilise this stretch: C86-C340, C243-C261, and C286-C309. N168 is a glycosylation site (N-linked (GlcNAc...) asparagine). S177 is an active-site residue. A glycan (N-linked (GlcNAc...) asparagine) is linked at N244. Catalysis depends on residues D377 and H434.

The protein belongs to the peptidase S10 family. As to expression, ubiquitous.

It localises to the secreted. In terms of biological role, probable carboxypeptidase. This chain is Serine carboxypeptidase-like 45 (SCPL45), found in Arabidopsis thaliana (Mouse-ear cress).